The following is a 1481-amino-acid chain: Cystic fibrosis transmembrane conductance regulator (1481 aa).

Residues 1–77 lie on the Cytoplasmic side of the membrane; sequence MQRSPLEKAS…KLINALRRCF (77 aa). Residues 78–98 traverse the membrane as a helical segment; sequence FWRFMFYGILLYLGEVTKAVQ. The ABC transmembrane type-1 1 domain maps to 81–365; sequence FMFYGILLYL…WAVQTWYDSL (285 aa). Residues 99 to 122 are Extracellular-facing; that stretch reads PLLLGRIIASYDPDNKEERSIAIY. A helical membrane pass occupies residues 123-146; sequence LGIGLCLLFIVRTLLLHPAIFGLH. At 147 to 195 the chain is on the cytoplasmic side; that stretch reads HIGMQMRIAMFSLIYKKTLKLSSRVLDKISIGQLVSLLSNNLNKFDEGL. Residues 196 to 216 form a helical membrane-spanning segment; that stretch reads ALAHFVWIVPLQVALLMGLIW. Residues 217 to 222 are Extracellular-facing; that stretch reads ELLQAS. Residues 223-243 traverse the membrane as a helical segment; the sequence is AFCGLGFLIVLALFQAGLGRM. Topologically, residues 244 to 298 are cytoplasmic; that stretch reads MMKYRDQRAGKINERLVITSEMIENIQSVKAYCWEEAMEKMIENLRQTELKLTRK. A helical transmembrane segment spans residues 299–319; sequence AAYVRYFNSSAFFFSGFFVVF. Over 320 to 339 the chain is Extracellular; it reads LSVLPYALIKGIVLRKIFTT. Residues 340–358 traverse the membrane as a helical segment; that stretch reads ISFCIVLRMAVTRQFPWAV. Residues 359-858 lie on the Cytoplasmic side of the membrane; that stretch reads QTWYDSLGAI…YLRYITVHKS (500 aa). ATP is bound by residues W401, S434, 458 to 465, and Q493; that span reads GSTGAGKT. Residues 423–646 enclose the ABC transporter 1 domain; that stretch reads NDDDSLFFSN…RPDFSSKLMG (224 aa). Residue C524 is the site of S-palmitoyl cysteine attachment. A phosphoserine mark is found at S549 and S660. Residues 654-831 form a disordered R region region; that stretch reads SAERRNSILT…EEINEEDLKE (178 aa). Phosphoserine; by PKA is present on S670. A Phosphoserine modification is found at S686. A Glycyl lysine isopeptide (Lys-Gly) (interchain with G-Cter in ubiquitin) cross-link involves residue K688. Phosphoserine is present on residues S700 and S712. A Phosphothreonine modification is found at T717. Phosphoserine occurs at positions 737, 753, 768, 790, 795, and 813. Residues 859-879 form a helical membrane-spanning segment; sequence LIFVLIWCLVIFLAEVAASLV. An ABC transmembrane type-1 2 domain is found at 859 to 1155; that stretch reads LIFVLIWCLV…AVNSSIDVDS (297 aa). The Extracellular segment spans residues 880-918; the sequence is VLWFLGNTPPQDKGNSTYSRNNSYAVIITRTSSYYVFYI. 2 N-linked (GlcNAc...) asparagine glycosylation sites follow: N894 and N900. Residues 919 to 939 form a discontinuously helical membrane-spanning segment; it reads YVGVADTLLAMGFFRGLPLVH. The Cytoplasmic portion of the chain corresponds to 940 to 990; that stretch reads TLITVSKILHHKMLHSVLQAPMSTLNTLKAGGILNRFSKDIAILDDLLPLT. Residues 991–1011 traverse the membrane as a helical segment; it reads IFDFIQLLLIVIGAIAVVAVL. At 1012–1013 the chain is on the extracellular side; that stretch reads QP. A helical transmembrane segment spans residues 1014–1034; sequence YIFVATVPVIVAFIMLRAYFL. Residues 1035 to 1095 are Cytoplasmic-facing; that stretch reads QTSQQLKQLE…TANWFLYLST (61 aa). The chain crosses the membrane as a helical span at residues 1096–1116; it reads LRWFQMRIEMIFVIFFIAVTF. Residues 1117–1130 lie on the Extracellular side of the membrane; sequence ISILTTGEGEGTVG. A helical transmembrane segment spans residues 1131 to 1151; the sequence is IILTLAMNIMSTLQWAVNSSI. Topologically, residues 1152 to 1481 are cytoplasmic; it reads DVDSLMRSVS…TEEEVQDTRL (330 aa). The ABC transporter 2 domain maps to 1211 to 1444; sequence MTVKDLTAKY…RSLFQQAISP (234 aa). ATP is bound by residues Y1220 and 1245 to 1252; that span reads GRTGSGKS. Residues 1387–1481 are interaction with GORASP2; sequence RTLKQAFADC…TEEEVQDTRL (95 aa). C1396 is lipidated: S-palmitoyl cysteine. S1445 and S1457 each carry phosphoserine. A PDZ-binding motif is present at residues 1479 to 1481; sequence TRL.

It belongs to the ABC transporter superfamily. ABCC family. CFTR transporter (TC 3.A.1.202) subfamily. Monomer; does not require oligomerization for channel activity. May form oligomers in the membrane. Interacts with SLC26A3, SLC26A6 and NHERF1. Interacts with SHANK2. Interacts with MYO6. Interacts (via C-terminus) with GOPC (via PDZ domain); this promotes CFTR internalization and thereby decreases channel activity. Interacts with SLC4A7 through NHERF1. Found in a complex with MYO5B and RAB11A. Interacts with ANO1. Interacts with SLC26A8. Interacts with AHCYL1; the interaction increases CFTR activity. Interacts with CSE1L. The core-glycosylated form interacts with GORASP2 (via PDZ GRASP-type 1 domain) in respone to ER stress. Interacts with MARCHF2; the interaction leads to CFTR ubiqtuitination and degradation. Interacts with ADGRG2. Post-translationally, N-glycosylated. In terms of processing, phosphorylated; cAMP treatment promotes phosphorylation and activates the channel. Dephosphorylation decreases the ATPase activity (in vitro). Phosphorylation at PKA sites activates the channel. Phosphorylation at PKC sites enhances the response to phosphorylation by PKA. Phosphorylated by AMPK; this inhibits channel activity. Ubiquitinated, leading to its degradation in the lysosome. Deubiquitination by USP10 in early endosomes enhances its endocytic recycling to the cell membrane. Ubiquitinated by RNF185 during ER stress. Ubiquitinated by MARCHF2.

It is found in the apical cell membrane. It localises to the early endosome membrane. Its subcellular location is the cell membrane. The protein resides in the recycling endosome membrane. The protein localises to the endoplasmic reticulum membrane. It is found in the nucleus. The enzyme catalyses ATP + H2O + closed Cl(-) channel = ADP + phosphate + open Cl(-) channel.. It catalyses the reaction chloride(in) = chloride(out). The catalysed reaction is hydrogencarbonate(in) = hydrogencarbonate(out). It carries out the reaction ATP + H2O = ADP + phosphate + H(+). In terms of biological role, epithelial ion channel that plays an important role in the regulation of epithelial ion and water transport and fluid homeostasis. Mediates the transport of chloride ions across the cell membrane. Possesses an intrinsic ATPase activity and utilizes ATP to gate its channel; the passive flow of anions through the channel is gated by cycles of ATP binding and hydrolysis by the ATP-binding domains. The ion channel is also permeable to HCO(3)(-); selectivity depends on the extracellular chloride concentration. Exerts its function also by modulating the activity of other ion channels and transporters. Contributes to the regulation of the pH and the ion content of the epithelial fluid layer. Modulates the activity of the epithelial sodium channel (ENaC) complex, in part by regulating the cell surface expression of the ENaC complex. May regulate bicarbonate secretion and salvage in epithelial cells by regulating the transporter SLC4A7. Can inhibit the chloride channel activity of ANO1. Plays a role in the chloride and bicarbonate homeostasis during sperm epididymal maturation and capacitation. This Macaca nemestrina (Pig-tailed macaque) protein is Cystic fibrosis transmembrane conductance regulator.